The sequence spans 289 residues: Phosphatidylserine decarboxylase proenzyme (289 aa).

Active-site charge relay system; for autoendoproteolytic cleavage activity residues include Asp89, His146, and Ser252. The Schiff-base intermediate with substrate; via pyruvic acid; for decarboxylase activity role is filled by Ser252. Ser252 is subject to Pyruvic acid (Ser); by autocatalysis.

It belongs to the phosphatidylserine decarboxylase family. PSD-B subfamily. Prokaryotic type I sub-subfamily. In terms of assembly, heterodimer of a large membrane-associated beta subunit and a small pyruvoyl-containing alpha subunit. Requires pyruvate as cofactor. Is synthesized initially as an inactive proenzyme. Formation of the active enzyme involves a self-maturation process in which the active site pyruvoyl group is generated from an internal serine residue via an autocatalytic post-translational modification. Two non-identical subunits are generated from the proenzyme in this reaction, and the pyruvate is formed at the N-terminus of the alpha chain, which is derived from the carboxyl end of the proenzyme. The autoendoproteolytic cleavage occurs by a canonical serine protease mechanism, in which the side chain hydroxyl group of the serine supplies its oxygen atom to form the C-terminus of the beta chain, while the remainder of the serine residue undergoes an oxidative deamination to produce ammonia and the pyruvoyl prosthetic group on the alpha chain. During this reaction, the Ser that is part of the protease active site of the proenzyme becomes the pyruvoyl prosthetic group, which constitutes an essential element of the active site of the mature decarboxylase.

Its subcellular location is the cell membrane. The enzyme catalyses a 1,2-diacyl-sn-glycero-3-phospho-L-serine + H(+) = a 1,2-diacyl-sn-glycero-3-phosphoethanolamine + CO2. It participates in phospholipid metabolism; phosphatidylethanolamine biosynthesis; phosphatidylethanolamine from CDP-diacylglycerol: step 2/2. In terms of biological role, catalyzes the formation of phosphatidylethanolamine (PtdEtn) from phosphatidylserine (PtdSer). This is Phosphatidylserine decarboxylase proenzyme from Nitrosospira multiformis (strain ATCC 25196 / NCIMB 11849 / C 71).